Consider the following 439-residue polypeptide: Dihydroorotase (439 aa).

His73 and His75 together coordinate Zn(2+). Residues 75–77 and Asn107 contribute to the substrate site; that span reads HLR. Zn(2+) contacts are provided by Asp165, His192, and His245. Substrate is bound at residue Asn291. Asp318 is a Zn(2+) binding site. Residue Asp318 is part of the active site. A substrate-binding site is contributed by His322.

This sequence belongs to the metallo-dependent hydrolases superfamily. DHOase family. Class I DHOase subfamily. Zn(2+) serves as cofactor.

It catalyses the reaction (S)-dihydroorotate + H2O = N-carbamoyl-L-aspartate + H(+). The protein operates within pyrimidine metabolism; UMP biosynthesis via de novo pathway; (S)-dihydroorotate from bicarbonate: step 3/3. Its function is as follows. Catalyzes the reversible cyclization of carbamoyl aspartate to dihydroorotate. The chain is Dihydroorotase from Syntrophobacter fumaroxidans (strain DSM 10017 / MPOB).